A 518-amino-acid polypeptide reads, in one-letter code: Glutamate--cysteine ligase (518 aa).

The protein belongs to the glutamate--cysteine ligase type 1 family. Type 1 subfamily.

The enzyme catalyses L-cysteine + L-glutamate + ATP = gamma-L-glutamyl-L-cysteine + ADP + phosphate + H(+). The protein operates within sulfur metabolism; glutathione biosynthesis; glutathione from L-cysteine and L-glutamate: step 1/2. This chain is Glutamate--cysteine ligase, found in Buchnera aphidicola subsp. Acyrthosiphon pisum (strain 5A).